Here is a 398-residue protein sequence, read N- to C-terminus: Chalcone synthase 1 (398 aa).

58–65 serves as a coordination point for CoA; the sequence is KFKRMCDK. Cysteine 167 (acyl-thioester intermediate) is an active-site residue. Residues threonine 200 and 219 to 220 contribute to the substrate site; that span reads GD. Residue alanine 311 coordinates CoA.

It belongs to the thiolase-like superfamily. Chalcone/stilbene synthases family. As to quaternary structure, homodimer.

It carries out the reaction (E)-4-coumaroyl-CoA + 3 malonyl-CoA + 3 H(+) = 2',4,4',6'-tetrahydroxychalcone + 3 CO2 + 4 CoA. It functions in the pathway secondary metabolite biosynthesis; flavonoid biosynthesis. Its function is as follows. The primary product of this enzyme is 4,2',4',6'-tetrahydroxychalcone (also termed naringenin-chalcone or chalcone) which can under specific conditions spontaneously isomerize into naringenin. This chain is Chalcone synthase 1 (CHS1), found in Oryza sativa subsp. japonica (Rice).